A 70-amino-acid polypeptide reads, in one-letter code: MARKLMARKTPPLVGLDTVQLRVETIWLTSQMDLFVLTDKGEPRITASRASASRVATFGMTSVWLKNSCF.

As to quaternary structure, interacts with VP1. Interacts with Large T antigen. Interacts with small t antigen. Phosphorylated by host PKC. Phosphorylation alters the stability and may also have an impact on the subcellular location.

The protein resides in the host cytoplasm. Its subcellular location is the host nucleus. In terms of biological role, alters the structure of the nuclear envelope. Involved in the perinuclear-nuclear localization of the capsid protein VP1 during virion assembly and maturation. May contribute to viral genome transcription and translation of viral late proteins. Plays an important role in the release of progeny virions from infected cells and in viral propagation. The polypeptide is Squirrel monkey agnoprotein (agnogene) (Saimiri boliviensis boliviensis (Bolivian squirrel monkey)).